A 252-amino-acid chain; its full sequence is Protein BTG3 (252 aa).

A disordered region spans residues 138–163 (VTSDYHSGSSSSDEDTSKEVDVKPSS).

It belongs to the BTG family. Ubiquitous.

Functionally, overexpression impairs serum-induced cell cycle progression from the G0/G1 to S phase. The sequence is that of Protein BTG3 (Btg3) from Mus musculus (Mouse).